Consider the following 363-residue polypeptide: Oxygen-dependent coproporphyrinogen-III oxidase (363 aa).

S119 lines the substrate pocket. A divalent metal cation is bound by residues H123 and H133. The active-site Proton donor is H133. Position 135–137 (N135–R137) interacts with substrate. A divalent metal cation contacts are provided by H167 and H197. Residues Y287–E322 are important for dimerization.

The protein belongs to the aerobic coproporphyrinogen-III oxidase family. In terms of assembly, homodimer. A divalent metal cation serves as cofactor.

The protein resides in the cytoplasm. The enzyme catalyses coproporphyrinogen III + O2 + 2 H(+) = protoporphyrinogen IX + 2 CO2 + 2 H2O. It functions in the pathway porphyrin-containing compound metabolism; protoporphyrin-IX biosynthesis; protoporphyrinogen-IX from coproporphyrinogen-III (O2 route): step 1/1. Functionally, involved in the heme and chlorophyll biosynthesis. Catalyzes the aerobic oxidative decarboxylation of propionate groups of rings A and B of coproporphyrinogen-III to yield the vinyl groups in protoporphyrinogen-IX. The protein is Oxygen-dependent coproporphyrinogen-III oxidase of Parasynechococcus marenigrum (strain WH8102).